A 316-amino-acid chain; its full sequence is Transaldolase (316 aa).

Lys132 acts as the Schiff-base intermediate with substrate in catalysis.

This sequence belongs to the transaldolase family. Type 1 subfamily. As to quaternary structure, homodimer.

The protein resides in the cytoplasm. It carries out the reaction D-sedoheptulose 7-phosphate + D-glyceraldehyde 3-phosphate = D-erythrose 4-phosphate + beta-D-fructose 6-phosphate. It participates in carbohydrate degradation; pentose phosphate pathway; D-glyceraldehyde 3-phosphate and beta-D-fructose 6-phosphate from D-ribose 5-phosphate and D-xylulose 5-phosphate (non-oxidative stage): step 2/3. In terms of biological role, transaldolase is important for the balance of metabolites in the pentose-phosphate pathway. The polypeptide is Transaldolase (Vibrio cholerae serotype O1 (strain ATCC 39541 / Classical Ogawa 395 / O395)).